We begin with the raw amino-acid sequence, 301 residues long: Lipoyl synthase (301 aa).

Residues C37, C42, C48, C63, C67, C70, and S276 each coordinate [4Fe-4S] cluster. The Radical SAM core domain occupies 49 to 265 (WSKKHATVMI…ERIARTKGFL (217 aa)).

The protein belongs to the radical SAM superfamily. Lipoyl synthase family. It depends on [4Fe-4S] cluster as a cofactor.

The protein localises to the cytoplasm. The enzyme catalyses [[Fe-S] cluster scaffold protein carrying a second [4Fe-4S](2+) cluster] + N(6)-octanoyl-L-lysyl-[protein] + 2 oxidized [2Fe-2S]-[ferredoxin] + 2 S-adenosyl-L-methionine + 4 H(+) = [[Fe-S] cluster scaffold protein] + N(6)-[(R)-dihydrolipoyl]-L-lysyl-[protein] + 4 Fe(3+) + 2 hydrogen sulfide + 2 5'-deoxyadenosine + 2 L-methionine + 2 reduced [2Fe-2S]-[ferredoxin]. The protein operates within protein modification; protein lipoylation via endogenous pathway; protein N(6)-(lipoyl)lysine from octanoyl-[acyl-carrier-protein]: step 2/2. In terms of biological role, catalyzes the radical-mediated insertion of two sulfur atoms into the C-6 and C-8 positions of the octanoyl moiety bound to the lipoyl domains of lipoate-dependent enzymes, thereby converting the octanoylated domains into lipoylated derivatives. The polypeptide is Lipoyl synthase (Rickettsia felis (strain ATCC VR-1525 / URRWXCal2) (Rickettsia azadi)).